Reading from the N-terminus, the 191-residue chain is 3-isopropylmalate dehydratase small subunit (191 aa).

It belongs to the LeuD family. LeuD type 1 subfamily. As to quaternary structure, heterodimer of LeuC and LeuD.

The catalysed reaction is (2R,3S)-3-isopropylmalate = (2S)-2-isopropylmalate. It functions in the pathway amino-acid biosynthesis; L-leucine biosynthesis; L-leucine from 3-methyl-2-oxobutanoate: step 2/4. In terms of biological role, catalyzes the isomerization between 2-isopropylmalate and 3-isopropylmalate, via the formation of 2-isopropylmaleate. The chain is 3-isopropylmalate dehydratase small subunit from Anaeromyxobacter dehalogenans (strain 2CP-C).